A 536-amino-acid chain; its full sequence is ATP synthase subunit alpha, mitochondrial (536 aa).

The transit peptide at 1–27 directs the protein to the mitochondrion; that stretch reads MLRQAGTRLLKVPVCGLRPSITLKRGY. 197 to 204 is an ATP binding site; the sequence is GDRQTGKT.

Belongs to the ATPase alpha/beta chains family. In terms of assembly, F-type ATPases have 2 components, CF(1) - the catalytic core - and CF(0) - the membrane proton channel. CF(1) has five subunits: alpha(3), beta(3), gamma(1), delta(1), epsilon(1). CF(0) has three main subunits: a, b and c.

The protein resides in the mitochondrion. It is found in the mitochondrion inner membrane. In terms of biological role, mitochondrial membrane ATP synthase (F(1)F(0) ATP synthase or Complex V) produces ATP from ADP in the presence of a proton gradient across the membrane which is generated by electron transport complexes of the respiratory chain. F-type ATPases consist of two structural domains, F(1) - containing the extramembraneous catalytic core, and F(0) - containing the membrane proton channel, linked together by a central stalk and a peripheral stalk. During catalysis, ATP synthesis in the catalytic domain of F(1) is coupled via a rotary mechanism of the central stalk subunits to proton translocation. Subunits alpha and beta form the catalytic core in F(1). Rotation of the central stalk against the surrounding alpha(3)beta(3) subunits leads to hydrolysis of ATP in three separate catalytic sites on the beta subunits. Subunit alpha does not bear the catalytic high-affinity ATP-binding sites. The protein is ATP synthase subunit alpha, mitochondrial (atp1) of Schizosaccharomyces pombe (strain 972 / ATCC 24843) (Fission yeast).